Consider the following 160-residue polypeptide: Cytochrome b6-f complex subunit 4 (160 aa).

3 consecutive transmembrane segments (helical) span residues leucine 36–valine 56, leucine 95–glutamate 115, and serine 131–isoleucine 151.

Belongs to the cytochrome b family. PetD subfamily. The 4 large subunits of the cytochrome b6-f complex are cytochrome b6, subunit IV (17 kDa polypeptide, PetD), cytochrome f and the Rieske protein, while the 4 small subunits are PetG, PetL, PetM and PetN. The complex functions as a dimer.

Its subcellular location is the cellular thylakoid membrane. Its function is as follows. Component of the cytochrome b6-f complex, which mediates electron transfer between photosystem II (PSII) and photosystem I (PSI), cyclic electron flow around PSI, and state transitions. This Prochlorococcus marinus subsp. pastoris (strain CCMP1986 / NIES-2087 / MED4) protein is Cytochrome b6-f complex subunit 4.